A 264-amino-acid polypeptide reads, in one-letter code: Tetraspanin-12 (264 aa).

The Cytoplasmic portion of the chain corresponds to Met-1 to Asn-13. The helical transmembrane segment at Ala-14–Gly-34 threads the bilayer. Residues Pro-35–Pro-45 are Extracellular-facing. The helical transmembrane segment at Leu-46–Tyr-66 threads the bilayer. At Gly-67–Tyr-75 the chain is on the cytoplasmic side. Residues Leu-76–Val-96 form a helical membrane-spanning segment. Residues Thr-97 to Arg-228 are Extracellular-facing. Asn-180 is a glycosylation site (N-linked (GlcNAc...) asparagine). Residues Ile-229–Cys-249 form a helical membrane-spanning segment. The Cytoplasmic segment spans residues Cys-250 to Phe-264.

Belongs to the tetraspanin (TM4SF) family.

The protein resides in the membrane. In terms of biological role, may be involved in the regulation of cell differentiation. This is Tetraspanin-12 (TET12) from Arabidopsis thaliana (Mouse-ear cress).